The following is a 552-amino-acid chain: Putative transport protein APJL_0985 (552 aa).

Transmembrane regions (helical) follow at residues 4–24, 29–49, 65–85, 95–115, and 161–181; these read IAII…IGHI, VGLG…CTHL, FGLI…FFAS, GFAV…HKLF, and IAYP…RIIF. RCK C-terminal domains are found at residues 190 to 275 and 277 to 360; these read QEFD…ILGE and ADVS…IIGD. Transmembrane regions (helical) follow at residues 370–390, 403–425, 438–458, 463–483, 492–512, and 529–549; these read MLPI…PLYL, GGPL…YWFM, IVLF…DTLL, LAWM…TGFV, YLSL…LAFA, and VYPL…ILLW.

The protein belongs to the AAE transporter (TC 2.A.81) family. YidE subfamily.

It localises to the cell membrane. This Actinobacillus pleuropneumoniae serotype 3 (strain JL03) protein is Putative transport protein APJL_0985.